Reading from the N-terminus, the 189-residue chain is Large ribosomal subunit protein bL9 (189 aa).

Belongs to the bacterial ribosomal protein bL9 family.

Its function is as follows. Binds to the 23S rRNA. This is Large ribosomal subunit protein bL9 from Beijerinckia indica subsp. indica (strain ATCC 9039 / DSM 1715 / NCIMB 8712).